The primary structure comprises 248 residues: Phosphomannomutase (248 aa).

Catalysis depends on D12, which acts as the Nucleophile. Mg(2+)-binding residues include D12 and D14. The active-site Proton donor/acceptor is the D14. Alpha-D-mannose 1-phosphate-binding residues include R21, R123, R134, R141, S179, and D181. Residues D207, F219, and T224 each contribute to the Mg(2+) site.

The protein belongs to the eukaryotic PMM family. As to quaternary structure, homodimer. It depends on Mg(2+) as a cofactor.

The protein localises to the cytoplasm. The enzyme catalyses alpha-D-mannose 1-phosphate = D-mannose 6-phosphate. It functions in the pathway nucleotide-sugar biosynthesis; GDP-alpha-D-mannose biosynthesis; alpha-D-mannose 1-phosphate from D-fructose 6-phosphate: step 2/2. Catalyzes the interconversion of mannose-6-phosphate to mannose-1-phosphate, the precursor for the synthesis of GDP-mannose. GDP-mannose is an essential sugar nucleotide for the synthesis of D-mannose-containing cell wall polysaccharides (galactomannans and glucomannans), glycolipids, glycoproteins and the antioxidant L-ascorbate. The chain is Phosphomannomutase from Spinacia oleracea (Spinach).